We begin with the raw amino-acid sequence, 545 residues long: Monocarboxylate transporter 8 (545 aa).

The interval 1–98 (MALPSPASEE…VETRGTARGF (98 aa)) is disordered. Position 2 is an N-acetylalanine (A2). Over 2 to 102 (ALPSPASEEA…GTARGFQPPE (101 aa)) the chain is Cytoplasmic. 2 repeat units span residues 29–50 (PVPE…PVPV) and 51–72 (PPPE…PLPE). The tract at residues 29–72 (PVPEPEPEPEPEPEPDPEPVPVPPPEPQPEPEPQPLPDPAPLPE) is 2 X 22 AA approximate tandem repeats. A compositionally biased stretch (acidic residues) spans 33–45 (PEPEPEPEPEPDP). Positions 46–70 (EPVPVPPPEPQPEPEPQPLPDPAPL) are enriched in pro residues. A helical transmembrane segment spans residues 103-123 (GGFGWIVVFAATWCNGSIFGI). Residues 124–149 (HNSVGILYSMLLEEEKEKNRQVEFQA) are Extracellular-facing. Residues 150 to 170 (AWVGALAMGMIFFCSPIVSIF) traverse the membrane as a helical segment. Residues 171 to 177 (TDRLGCR) are Cytoplasmic-facing. A helical membrane pass occupies residues 178–198 (ITATTGAAVAFIGLHTSSFTS). The Extracellular segment spans residues 199–206 (SLSLRYFT). Residues 207–227 (YGILFGCGCSFAFQPSLVILG) form a helical membrane-spanning segment. At 228-235 (HYFQRRLG) the chain is on the cytoplasmic side. A helical membrane pass occupies residues 236–256 (LANGVVSAGSSIFSMSFPFLI). Over 257-264 (KMLGDKIK) the chain is Extracellular. The chain crosses the membrane as a helical span at residues 265-285 (LAQTFQVLSTFMFVLTLLSLT). The Cytoplasmic portion of the chain corresponds to 286-328 (YRPLLPSSQDTPSKRGAHTLRQRFLVQFRKYFNMRVFRQRTYR). The helical transmembrane segment at 329–349 (IWAFGIAAAALGYFVPYVHLM) threads the bilayer. Over 350–362 (KYVEDKFKEIKET) the chain is Extracellular. Residues 363 to 383 (WVLLVCIGATSGLGRLVSGHI) traverse the membrane as a helical segment. Over 384-392 (SDSIPGLKK) the chain is Cytoplasmic. A helical membrane pass occupies residues 393-413 (IYLQVLSFLLLGLMSMMIPLC). Residues 414-415 (RD) are Extracellular-facing. A helical membrane pass occupies residues 416–436 (FGGLIVVCLFLGLCDGFFITI). Over 437-453 (MAPIAFELVGPMQASQA) the chain is Cytoplasmic. The chain crosses the membrane as a helical span at residues 454–474 (IGYLLGMMALPMIAGPPIAGL). Residues 475 to 483 (LRNCFGDYH) are Extracellular-facing. A helical membrane pass occupies residues 484 to 504 (VAFYFAGVPPIIGAVILFFVP). The Cytoplasmic portion of the chain corresponds to 505 to 545 (LMHQRMFKKEQRDSSKDKMLSHDPDPNGELLPGSPTPEEPI). Basic and acidic residues predominate over residues 514-529 (EQRDSSKDKMLSHDPD). Positions 514–545 (EQRDSSKDKMLSHDPDPNGELLPGSPTPEEPI) are disordered. T540 is subject to Phosphothreonine.

This sequence belongs to the major facilitator superfamily. Monocarboxylate porter (TC 2.A.1.13) family. In terms of assembly, monomer. Homodimer. Homooligomer. As to expression, expressed in cerebral microvessels.

It is found in the cell membrane. Its subcellular location is the apical cell membrane. It carries out the reaction 3,3',5-triiodo-L-thyronine(out) = 3,3',5-triiodo-L-thyronine(in). The catalysed reaction is 3,3',5'-triiodo-L-thyronine(out) = 3,3',5'-triiodo-L-thyronine(in). It catalyses the reaction L-thyroxine(out) = L-thyroxine(in). The enzyme catalyses 3,3'-diiodo-L-thyronine(out) = 3,3'-diiodo-L-thyronine(in). In terms of biological role, specific thyroid hormone transmembrane transporter, that mediates both uptake and efflux of thyroid hormones across the cell membrane independently of pH or a Na(+) gradient. Major substrates are the iodothyronines T3 and T4 and to a lesser extent rT3 and 3,3-diiodothyronine (3,3'-T2). Acts as an important mediator of thyroid hormone transport, especially T3, through the blood-brain barrier. The chain is Monocarboxylate transporter 8 (Slc16a2) from Mus musculus (Mouse).